We begin with the raw amino-acid sequence, 225 residues long: UPF0173 metal-dependent hydrolase PYRAB05000 (225 aa).

This sequence belongs to the UPF0173 family.

This is UPF0173 metal-dependent hydrolase PYRAB05000 from Pyrococcus abyssi (strain GE5 / Orsay).